Reading from the N-terminus, the 338-residue chain is tRNA (cytidine(56)-2'-O)-methyltransferase (338 aa).

S-adenosyl-L-methionine-binding positions include Leu-79 and 105–109; that span reads GSEKV. One can recognise an HD domain in the interval 188–295; it reads LINHVKSVKE…VAHADNLFAG (108 aa).

This sequence belongs to the aTrm56 family. Homodimer.

It localises to the cytoplasm. The catalysed reaction is cytidine(56) in tRNA + S-adenosyl-L-methionine = 2'-O-methylcytidine(56) in tRNA + S-adenosyl-L-homocysteine + H(+). Functionally, specifically catalyzes the AdoMet-dependent 2'-O-ribose methylation of cytidine at position 56 in tRNAs. The polypeptide is tRNA (cytidine(56)-2'-O)-methyltransferase (Thermoplasma volcanium (strain ATCC 51530 / DSM 4299 / JCM 9571 / NBRC 15438 / GSS1)).